Reading from the N-terminus, the 118-residue chain is Large ribosomal subunit protein bL20 (118 aa).

This sequence belongs to the bacterial ribosomal protein bL20 family.

Binds directly to 23S ribosomal RNA and is necessary for the in vitro assembly process of the 50S ribosomal subunit. It is not involved in the protein synthesizing functions of that subunit. The sequence is that of Large ribosomal subunit protein bL20 from Edwardsiella ictaluri (strain 93-146).